The chain runs to 23 residues: uncharacterized protein (23 aa).

The helical transmembrane segment at 3-23 (YFFMGISFMVIVWAGTFALMI) threads the bilayer.

It localises to the cell inner membrane. This is an uncharacterized protein from Escherichia coli (strain K12).